The chain runs to 770 residues: Pyrophosphate-energized vacuolar membrane proton pump 1 (770 aa).

Topologically, residues 1-9 are intravacuolar; sequence MVAPALLPE. The chain crosses the membrane as a helical span at residues 10–36; the sequence is LWTEILVPICAVIGIAFSLFQWYVVSR. The Cytoplasmic portion of the chain corresponds to 37–88; the sequence is VKLTSDLGASSSGGANNGKNGYGDYLIEEEEGVNDQSVVAKCAEIQTAISEG. Residues 89–118 form a helical membrane-spanning segment; sequence ATSFLFTEYKYVGVFMIFFAAVIFVFLGSV. Topologically, residues 119–139 are intravacuolar; the sequence is EGFSTDNKPCTYDTTRTCKPA. Cysteine 128 and cysteine 136 form a disulfide bridge. A helical transmembrane segment spans residues 140–167; sequence LATAAFSTIAFVLGAVTSVLSGFLGMKI. Residues 168–190 lie on the Cytoplasmic side of the membrane; that stretch reads ATYANARTTLEARKGVGKAFIVA. The helical transmembrane segment at 191-220 threads the bilayer; the sequence is FRSGAVMGFLLAASGLLVLYITINVFKIYY. Topologically, residues 221-223 are intravacuolar; that stretch reads GDD. Residues 224 to 252 form a helical membrane-spanning segment; the sequence is WEGLFEAITGYGLGGSSMALFGRVGGGIY. Topologically, residues 253 to 290 are cytoplasmic; the sequence is TKAADVGADLVGKIERNIPEDDPRNPAVIADNVGDNVG. Position 254 (lysine 254) interacts with substrate. Residues aspartate 257, aspartate 261, and aspartate 287 each coordinate Mg(2+). Residues 291–316 form a helical membrane-spanning segment; the sequence is DIAGMGSDLFGSYAEASCAALVVASI. At 317-324 the chain is on the intravacuolar side; sequence SSFGINHD. The chain crosses the membrane as a helical span at residues 325–350; it reads FTAMCYPLLISSMGILVCLITTLFAT. The Cytoplasmic portion of the chain corresponds to 351–358; sequence DFFEIKLV. A helical transmembrane segment spans residues 359–386; the sequence is KEIEPALKNQLIISTVIMTVGIAIVSWV. The Intravacuolar segment spans residues 387–405; it reads GLPTSFTIFNFGTQKVVKN. A helical membrane pass occupies residues 406–429; it reads WQLFLCVCVGLWAGLIIGFVTEYY. Topologically, residues 430–451 are cytoplasmic; that stretch reads TSNAYSPVQDVADSCRTGAATN. Residues 452–476 form a helical membrane-spanning segment; the sequence is VIFGLALGYKSVIIPIFAIAISIFV. At 477–482 the chain is on the intravacuolar side; that stretch reads SFSFAA. Residues 483–509 form a helical membrane-spanning segment; the sequence is MYGVAVAALGMLSTIATGLAIDAYGPI. At 510 to 538 the chain is on the cytoplasmic side; sequence SDNAGGIAEMAGMSHRIRERTDALDAAGN. Positions 511 and 538 each coordinate Mg(2+). The helical transmembrane segment at 539 to 567 threads the bilayer; sequence TTAAIGKGFAIGSAALVSLALFGAFVSRA. Residues 568-577 are Intravacuolar-facing; it reads GIHTVDVLTP. A helical membrane pass occupies residues 578–606; sequence KVIIGLLVGAMLPYWFSAMTMKSVGSAAL. The Cytoplasmic portion of the chain corresponds to 607–635; it reads KMVEEVRRQFNTIPGLMEGTAKPDYATCV. The chain crosses the membrane as a helical span at residues 636 to 664; it reads KISTDASIKEMIPPGCLVMLTPLIVGFFF. Glycine 665 is a topological domain (intravacuolar). The helical transmembrane segment at 666 to 693 threads the bilayer; it reads VETLSGVLAGSLVSGVQIAISASNTGGA. The Cytoplasmic segment spans residues 694-736; that stretch reads WDNAKKYIEAGVSEHAKSLGPKGSEPHKAAVIGDTIGDPLKDT. Aspartate 695 and aspartate 731 together coordinate Mg(2+). A substrate-binding site is contributed by lysine 734. A helical membrane pass occupies residues 737-762; sequence SGPSLNILIKLMAVESLVFAPFFATH. At 763–770 the chain is on the intravacuolar side; that stretch reads GGILFKYF.

Belongs to the H(+)-translocating pyrophosphatase (TC 3.A.10) family. K(+)-stimulated subfamily. In terms of assembly, monomer. As to expression, ubiquitous (at protein level). Mostly expressed in vascular tissues, meristems and root pericycle.

It is found in the vacuole membrane. It localises to the endosome membrane. The protein localises to the cell membrane. It catalyses the reaction diphosphate + H2O + H(+)(in) = 2 phosphate + 2 H(+)(out). Activated by K(+) and Mg(2+). Inhibited by Ca(2+), N,N'-dicyclohexylcarbodiimide (DCCD), N-ethylmaleimide (NEM) and aminomethylenediphosphonate (AMDP), and, to a lower extent, by fluoride (KF). Its function is as follows. Contributes to the transtonoplast (from cytosol to vacuole lumen) H(+)-electrochemical potential difference. It establishes a proton gradient of similar and often greater magnitude than the H(+)-ATPase on the same membrane. In addition, facilitates auxin transport by modulating apoplastic pH and regulates auxin-mediated developmental processes. Confers tolerance to NaCl and to drought by increasing ion retention. This is Pyrophosphate-energized vacuolar membrane proton pump 1 (AVP1) from Arabidopsis thaliana (Mouse-ear cress).